Reading from the N-terminus, the 308-residue chain is Porphobilinogen deaminase (308 aa).

At C240 the chain carries S-(dipyrrolylmethanemethyl)cysteine.

Belongs to the HMBS family. In terms of assembly, monomer. Dipyrromethane is required as a cofactor.

The catalysed reaction is 4 porphobilinogen + H2O = hydroxymethylbilane + 4 NH4(+). Its pathway is porphyrin-containing compound metabolism; protoporphyrin-IX biosynthesis; coproporphyrinogen-III from 5-aminolevulinate: step 2/4. Tetrapolymerization of the monopyrrole PBG into the hydroxymethylbilane pre-uroporphyrinogen in several discrete steps. This Campylobacter hominis (strain ATCC BAA-381 / DSM 21671 / CCUG 45161 / LMG 19568 / NCTC 13146 / CH001A) protein is Porphobilinogen deaminase.